We begin with the raw amino-acid sequence, 313 residues long: MEPNVRFWITERQSFIQRFLQWTELLDPTNLVLSIEKIEKSRQLLLTNEDASRGDLEDKRIQEAWKRSLSTVHPDNSRLIPGPFRPAALLPFTAPTLFLSMLPVKSLKSMILPQASFYTYSTAFNIVNGNASYDRRAHESLLLGAGVIVSSTFLGLFPRLLQVRLSMNSVLSRNFIPVIILAQLSGMNVIASRSLEPMRGIEVMDKEGNVIGYSRKAGTKAVKDTATSRVVLFGTSAFIPEVFAYFFKRTQFFLQNPWSLWTLKLSCTVLVMGLMVPVSFSVFPQIGRIQCNELEKEIQSATEETELFYNRGV.

The next 5 helical transmembrane spans lie at 87-107 (AALL…VKSL), 141-161 (LLLG…PRLL), 175-191 (FIPV…NVIA), 230-247 (VVLF…AYFF), and 269-289 (VLVM…IGRI).

The protein belongs to the sideroflexin family.

It is found in the mitochondrion inner membrane. Its function is as follows. Mitochondrial amino-acid transporter. Does not act as a serine transporter: not able to mediate transport of serine into mitochondria. The protein is Sideroflexin-4 of Bos taurus (Bovine).